Here is a 135-residue protein sequence, read N- to C-terminus: Bacilliredoxin CHU_0972 (135 aa).

It belongs to the bacilliredoxin family.

This Cytophaga hutchinsonii (strain ATCC 33406 / DSM 1761 / CIP 103989 / NBRC 15051 / NCIMB 9469 / D465) protein is Bacilliredoxin CHU_0972.